Here is a 201-residue protein sequence, read N- to C-terminus: NADH-quinone oxidoreductase subunit C (201 aa).

Belongs to the complex I 30 kDa subunit family. NDH-1 is composed of 14 different subunits. Subunits NuoB, C, D, E, F, and G constitute the peripheral sector of the complex.

Its subcellular location is the cell inner membrane. The catalysed reaction is a quinone + NADH + 5 H(+)(in) = a quinol + NAD(+) + 4 H(+)(out). Functionally, NDH-1 shuttles electrons from NADH, via FMN and iron-sulfur (Fe-S) centers, to quinones in the respiratory chain. The immediate electron acceptor for the enzyme in this species is believed to be ubiquinone. Couples the redox reaction to proton translocation (for every two electrons transferred, four hydrogen ions are translocated across the cytoplasmic membrane), and thus conserves the redox energy in a proton gradient. In Mesorhizobium japonicum (strain LMG 29417 / CECT 9101 / MAFF 303099) (Mesorhizobium loti (strain MAFF 303099)), this protein is NADH-quinone oxidoreductase subunit C.